Consider the following 484-residue polypeptide: Phosphoenolpyruvate carboxylase (484 aa).

This sequence belongs to the PEPCase type 2 family. As to quaternary structure, homotetramer. The cofactor is Mg(2+).

The enzyme catalyses oxaloacetate + phosphate = phosphoenolpyruvate + hydrogencarbonate. Catalyzes the irreversible beta-carboxylation of phosphoenolpyruvate (PEP) to form oxaloacetate (OAA), a four-carbon dicarboxylic acid source for the tricarboxylic acid cycle. The sequence is that of Phosphoenolpyruvate carboxylase from Methanospirillum hungatei JF-1 (strain ATCC 27890 / DSM 864 / NBRC 100397 / JF-1).